A 454-amino-acid polypeptide reads, in one-letter code: MLAVAVLAAGKGTRMKSALPKVLQPLAGATLVERVLASARNLAPERRLLIVGHQAERVEAQLSSNGGLEFVLQQPQNGTGHAVQQLLAPLQGFQGELLVLNGDVPLLRAETIEALVSTHRSSQADVTLLTARLDDPTGYGRVFADANGRVSAIIEHRDCSDEQRSNNLTNAGIYCFNWGKLAEVLPQLSTDNDQGELYLTDTVQLLDVAMQMEVSDPDEVNGINNRRQLAQCEGVLQQRLRDHWMDEGVTFVDPASCTLSEDCSFGCDVVIEPQTHLRGACRIGDNCRLGPGSLLDNAELGCDVTVVQSVVRDARVGNDVAIGPFAHIRPATDVGDSCKIGNFVEIKKSVIAAGSKVNHLSYIGDAELGANVNVGAGTITANFDGTNKHLTVIGEGSKTGANSVLVAPVVIGKNVTIGAGSTITKAVPDGSLAIGRAKQLTKEGWDRNTQAAQS.

The pyrophosphorylase stretch occupies residues 1 to 226; sequence MLAVAVLAAG…PDEVNGINNR (226 aa). UDP-N-acetyl-alpha-D-glucosamine-binding positions include 7 to 10, Lys21, Gln73, and 78 to 79; these read LAAG and GT. Asp103 provides a ligand contact to Mg(2+). UDP-N-acetyl-alpha-D-glucosamine contacts are provided by Gly140, Glu155, Asn170, and Asn224. Asn224 contributes to the Mg(2+) binding site. The linker stretch occupies residues 227–247; the sequence is RQLAQCEGVLQQRLRDHWMDE. Residues 248–454 are N-acetyltransferase; that stretch reads GVTFVDPASC…WDRNTQAAQS (207 aa). Residues Arg329 and Lys347 each coordinate UDP-N-acetyl-alpha-D-glucosamine. His359 serves as the catalytic Proton acceptor. Positions 362 and 373 each coordinate UDP-N-acetyl-alpha-D-glucosamine. Acetyl-CoA-binding residues include Ala376, Ala419, and Arg436.

It in the N-terminal section; belongs to the N-acetylglucosamine-1-phosphate uridyltransferase family. The protein in the C-terminal section; belongs to the transferase hexapeptide repeat family. In terms of assembly, homotrimer. The cofactor is Mg(2+).

It is found in the cytoplasm. It catalyses the reaction alpha-D-glucosamine 1-phosphate + acetyl-CoA = N-acetyl-alpha-D-glucosamine 1-phosphate + CoA + H(+). The catalysed reaction is N-acetyl-alpha-D-glucosamine 1-phosphate + UTP + H(+) = UDP-N-acetyl-alpha-D-glucosamine + diphosphate. It participates in nucleotide-sugar biosynthesis; UDP-N-acetyl-alpha-D-glucosamine biosynthesis; N-acetyl-alpha-D-glucosamine 1-phosphate from alpha-D-glucosamine 6-phosphate (route II): step 2/2. Its pathway is nucleotide-sugar biosynthesis; UDP-N-acetyl-alpha-D-glucosamine biosynthesis; UDP-N-acetyl-alpha-D-glucosamine from N-acetyl-alpha-D-glucosamine 1-phosphate: step 1/1. It functions in the pathway bacterial outer membrane biogenesis; LPS lipid A biosynthesis. Catalyzes the last two sequential reactions in the de novo biosynthetic pathway for UDP-N-acetylglucosamine (UDP-GlcNAc). The C-terminal domain catalyzes the transfer of acetyl group from acetyl coenzyme A to glucosamine-1-phosphate (GlcN-1-P) to produce N-acetylglucosamine-1-phosphate (GlcNAc-1-P), which is converted into UDP-GlcNAc by the transfer of uridine 5-monophosphate (from uridine 5-triphosphate), a reaction catalyzed by the N-terminal domain. This chain is Bifunctional protein GlmU, found in Synechococcus sp. (strain CC9311).